Here is a 308-residue protein sequence, read N- to C-terminus: Zinc transporter ZIP9 (308 aa).

A helical transmembrane segment spans residues 4–24; sequence FLSISLLSVAMLVGCYVAGII. Asparagine 29 carries an N-linked (GlcNAc...) asparagine glycan. 5 consecutive transmembrane segments (helical) span residues 35 to 55, 107 to 127, 147 to 167, 177 to 197, and 211 to 231; these read LKLVTVLGAGLLCGTALAVIV, AYIGVSLVLGFVFMLLVDQIG, ITTTLGLVVHAAADGVALGAA, LIVFVAIMLHKAPAAFGLVSF, and HLLVFALAAPAMSMLTYLGLS. Residue asparagine 242 is glycosylated (N-linked (GlcNAc...) asparagine). The next 2 membrane-spanning stretches (helical) occupy residues 245 to 265 and 287 to 307; these read GVAMLFSAGTFLYVATVHVLP and LEVAALVLGCLIPLILSIGHQ.

This sequence belongs to the ZIP transporter (TC 2.A.5) family.

It localises to the golgi apparatus. Its subcellular location is the trans-Golgi network membrane. It is found in the cell membrane. The protein localises to the cytoplasm. The protein resides in the perinuclear region. It localises to the mitochondrion. Its subcellular location is the nucleus. The catalysed reaction is Zn(2+)(in) = Zn(2+)(out). Transports zinc ions across cell and organelle membranes into the cytoplasm and regulates intracellular zinc homeostasis. Participates in the zinc ions efflux out of the secretory compartments. Regulates intracellular zinc level, resulting in the enhancement of AKT1 and MAPK3/MAPK1 (Erk1/2) phosphorylation in response to the BCR activation. Also functions as a membrane androgen receptor that mediates, through a G protein, the non-classical androgen signaling pathway, characterized by the activation of MAPK3/MAPK1 (Erk1/2) and transcription factors CREB1 or ATF1. This pathway contributes to CLDN1 and CLDN5 expression and tight junction formation between adjacent Sertoli cells. Mediates androgen-induced vascular endothelial cell proliferation through activation of an inhibitory G protein leading to the AKT1 and MAPK3/MAPK1 (Erk1/2) activation which in turn modulate inhibition (phosphorylation) of GSK3B and CCND1 transcription. Moreover, has dual functions as a membrane-bound androgen receptor and as an androgen-dependent zinc transporter both of which are mediated through an inhibitory G protein (Gi) that mediates both MAP kinase and zinc signaling leading to the androgen-dependent apoptotic process. This chain is Zinc transporter ZIP9, found in Mus musculus (Mouse).